The chain runs to 315 residues: Jacalin-related lectin 10 (315 aa).

An N-terminal signal peptide occupies residues 1–23; it reads MVIIYIFLFLSSAIIDSTGLAKA. 2 Jacalin-type lectin domains span residues 24 to 165 and 168 to 312; these read QKLD…YLTT and PTKS…YFSP.

The protein belongs to the jacalin lectin family.

This is Jacalin-related lectin 10 (JAL10) from Arabidopsis thaliana (Mouse-ear cress).